Here is a 256-residue protein sequence, read N- to C-terminus: Major prion protein (256 aa).

The N-terminal stretch at 1–24 is a signal peptide; that stretch reads MVKSHIGSWILVLFVAMWSDVGLC. The tract at residues 25-233 is interaction with GRB2, ERI3 and SYN1; sequence KKRPKPGGGW…ESQAYYQRGA (209 aa). The tract at residues 28 to 110 is disordered; that stretch reads PKPGGGWNTG…QWNKPSKPKT (83 aa). A run of 5 repeats spans residues 54 to 62, 63 to 70, 71 to 78, 79 to 86, and 87 to 95. Residues 54–95 form a 5 X 8 AA tandem repeats of P-H-G-G-G-W-G-Q region; sequence PQGAGGWGQPHGGGWGQPHGGGWGQPHGGGWGQPHGGGGWGQ. The segment covering 56-97 has biased composition (gly residues); it reads GAGGWGQPHGGGWGQPHGGGWGQPHGGGWGQPHGGGGWGQGG. Cu(2+) contacts are provided by H64, G65, G66, H72, G73, G74, H80, G81, G82, H88, G90, and G91. A disulfide bond links C182 and C217. N-linked (GlcNAc...) asparagine glycosylation is found at N184 and N200. A233 is lipidated: GPI-anchor amidated alanine. Residues 234–256 constitute a propeptide, removed in mature form; it reads SVILFSSPPVILLISFLIFLIVG.

Belongs to the prion family. In terms of assembly, monomer and homodimer. Has a tendency to aggregate into amyloid fibrils containing a cross-beta spine, formed by a steric zipper of superposed beta-strands. Soluble oligomers may represent an intermediate stage on the path to fibril formation. Copper binding may promote oligomerization. Interacts with GRB2, APP, ERI3/PRNPIP and SYN1. Mislocalized cytosolically exposed PrP interacts with MGRN1; this interaction alters MGRN1 subcellular location and causes lysosomal enlargement. Interacts with KIAA1191.

The protein resides in the cell membrane. It localises to the golgi apparatus. Its function is as follows. Its primary physiological function is unclear. Has cytoprotective activity against internal or environmental stresses. May play a role in neuronal development and synaptic plasticity. May be required for neuronal myelin sheath maintenance. May play a role in iron uptake and iron homeostasis. Soluble oligomers are toxic to cultured neuroblastoma cells and induce apoptosis (in vitro). Association with GPC1 (via its heparan sulfate chains) targets PRNP to lipid rafts. Also provides Cu(2+) or Zn(2+) for the ascorbate-mediated GPC1 deaminase degradation of its heparan sulfate side chains. The protein is Major prion protein (PRNP) of Moschus chrysogaster (Alpine musk deer).